The primary structure comprises 232 residues: Pyridoxine 5'-phosphate synthase (232 aa).

Asparagine 7 contacts 3-amino-2-oxopropyl phosphate. Residue aspartate 9 to histidine 10 coordinates 1-deoxy-D-xylulose 5-phosphate. Arginine 18 contributes to the 3-amino-2-oxopropyl phosphate binding site. Catalysis depends on histidine 43, which acts as the Proton acceptor. 1-deoxy-D-xylulose 5-phosphate is bound by residues arginine 45 and histidine 50. The active-site Proton acceptor is glutamate 69. Threonine 99 contacts 1-deoxy-D-xylulose 5-phosphate. Histidine 185 acts as the Proton donor in catalysis. Residues glycine 186 and glycine 207–histidine 208 each bind 3-amino-2-oxopropyl phosphate.

It belongs to the PNP synthase family. As to quaternary structure, homooctamer; tetramer of dimers.

The protein resides in the cytoplasm. It catalyses the reaction 3-amino-2-oxopropyl phosphate + 1-deoxy-D-xylulose 5-phosphate = pyridoxine 5'-phosphate + phosphate + 2 H2O + H(+). Its pathway is cofactor biosynthesis; pyridoxine 5'-phosphate biosynthesis; pyridoxine 5'-phosphate from D-erythrose 4-phosphate: step 5/5. Its function is as follows. Catalyzes the complicated ring closure reaction between the two acyclic compounds 1-deoxy-D-xylulose-5-phosphate (DXP) and 3-amino-2-oxopropyl phosphate (1-amino-acetone-3-phosphate or AAP) to form pyridoxine 5'-phosphate (PNP) and inorganic phosphate. The protein is Pyridoxine 5'-phosphate synthase of Gluconobacter oxydans (strain 621H) (Gluconobacter suboxydans).